A 401-amino-acid polypeptide reads, in one-letter code: NALCN channel auxiliary factor 2 (401 aa).

Residues 42–62 traverse the membrane as a helical segment; it reads LASLLFFTALLSDHLWLCAGG. N77, N97, N153, and N178 each carry an N-linked (GlcNAc...) asparagine glycan. The chain crosses the membrane as a helical span at residues 362–382; the sequence is LCVLVLFLLHTFISITTLQHC.

The protein belongs to the NALF family.

Its subcellular location is the membrane. Its function is as follows. Probable component of the NALCN channel complex, a channel that regulates the resting membrane potential and controls neuronal excitability. This Danio rerio (Zebrafish) protein is NALCN channel auxiliary factor 2 (nalf2).